We begin with the raw amino-acid sequence, 434 residues long: Exopolygalacturonase X-1 (434 aa).

An N-terminal signal peptide occupies residues 1 to 22 (MKLSHLLTSAVSVLSLGLTVEG). Residues asparagine 113, asparagine 129, and asparagine 199 are each glycosylated (N-linked (GlcNAc...) asparagine). Residues 231-252 (SKNIVIQNSVINNGDDCVSFKP) form a PbH1 1 repeat. The Proton donor role is filled by aspartate 245. Cysteine 247 and cysteine 264 form a disulfide bridge. N-linked (GlcNAc...) asparagine glycosylation is found at asparagine 253 and asparagine 265. The PbH1 2 repeat unit spans residues 254–274 (STEILVQNLYCNGSHGISVGS). Histidine 268 is a catalytic residue. N-linked (GlcNAc...) asparagine glycans are attached at residues asparagine 292, asparagine 297, asparagine 329, asparagine 354, and asparagine 364. Residues 327–348 (VSNITYEDMYIENVDWAIEITQ) form a PbH1 3 repeat. The stretch at 362–405 (PSNLTISDVYISNMYGTTSSARDPNIGTIVCSSPDVCSNIYVEN) is one PbH1 4 repeat. Cysteine 392 and cysteine 398 form a disulfide bridge. 2 N-linked (GlcNAc...) asparagine glycosylation sites follow: asparagine 423 and asparagine 430.

Belongs to the glycosyl hydrolase 28 family.

Its subcellular location is the secreted. It carries out the reaction [(1-&gt;4)-alpha-D-galacturonosyl](n) + H2O = alpha-D-galacturonate + [(1-&gt;4)-alpha-D-galacturonosyl](n-1). Its function is as follows. Specific in hydrolyzing the terminal glycosidic bond of polygalacturonic acid and oligogalacturonates. The polypeptide is Exopolygalacturonase X-1 (pgaX-1) (Emericella nidulans (strain FGSC A4 / ATCC 38163 / CBS 112.46 / NRRL 194 / M139) (Aspergillus nidulans)).